Here is a 217-residue protein sequence, read N- to C-terminus: NADPH-dependent 3-demethoxyubiquinone 3-hydroxylase, mitochondrial (217 aa).

The N-terminal 35 residues, M1–R35, are a transit peptide targeting the mitochondrion. The segment at R11 to R29 is required for nuclear localization. Repeat copies occupy residues A48–L129 and G130–L217. Residues A48–L217 are 2 X approximate tandem repeats. NADH is bound at residue R51. Positions 60, 90, 93, 142, 178, and 181 each coordinate Fe cation. Residues Y212 and R216 each contribute to the NADH site.

This sequence belongs to the COQ7 family. In terms of assembly, component of a multi-subunit COQ enzyme complex. Interacts with COQ8B and COQ6. Interacts with COQ9. Fe cation serves as cofactor. Expressed dominantly in heart and skeletal muscle.

It localises to the mitochondrion inner membrane. Its subcellular location is the mitochondrion. The protein resides in the nucleus. It is found in the chromosome. The enzyme catalyses a 5-methoxy-2-methyl-3-(all-trans-polyprenyl)benzoquinone + NADH + O2 = a 3-demethylubiquinone + NAD(+) + H2O. It participates in cofactor biosynthesis; ubiquinone biosynthesis. Functionally, catalyzes the hydroxylation of the 5-methoxy-2-methyl-3-(all-trans-polyprenyl)benzoquinone at the C6 position and participates in the biosynthesis of ubiquinone. Catalyzes the reaction through a substrate-mediated reduction pathway, whereby NADH shuttles electrons to 5-methoxy-2-methyl-3-(all-trans-decaprenyl)benzoquinone, which then transfers the electrons to the two Fe(3+) centers. The binding of 5-methoxy-2-methyl-3-(all-trans-polyprenyl)benzoquinone (DMQn) mediates reduction of the diiron center by nicotinamide adenine dinucleotide (NADH) and initiates oxygen activation for subsequent DMQ hydroxylation. The physiological substrates are 5-methoxy-2-methyl-3-(all-trans-nonaprenyl)benzoquinone (DMQ(9)) and 5-methoxy-2-methyl-3-(all-trans-decaprenyl)benzoquinone (DMQ(10)), however in vitro the enzyme does not have any specificity concerning the length of the polyprenyl tail, and accepts tails of various lengths with similar efficiency. Also has a structural role in the COQ enzyme complex, stabilizing other COQ polypeptides. Involved in lifespan determination in a ubiquinone-independent manner. Plays a role in modulating mitochondrial stress responses, acting in the nucleus, perhaps via regulating gene expression, independent of its characterized mitochondrial function in ubiquinone biosynthesis. The protein is NADPH-dependent 3-demethoxyubiquinone 3-hydroxylase, mitochondrial of Homo sapiens (Human).